The sequence spans 360 residues: Geranylgeranyl pyrophosphate synthase 9, chloroplastic (360 aa).

The N-terminal 39 residues, 1 to 39, are a transit peptide targeting the chloroplast; the sequence is MATTVHLSSSSLFSQSRGRRDNSISSVKSLRKRTVLSLS. Residues Lys-106, Arg-109, and His-138 each contribute to the isopentenyl diphosphate site. Mg(2+) is bound by residues Asp-145 and Asp-151. Residue Arg-156 participates in dimethylallyl diphosphate binding. Residue Arg-157 coordinates isopentenyl diphosphate. 5 residues coordinate dimethylallyl diphosphate: Lys-245, Thr-246, Gln-283, Lys-300, and Lys-310.

Belongs to the FPP/GGPP synthase family. In terms of assembly, monomer. No interactions with GGR. It depends on Mg(2+) as a cofactor.

It is found in the plastid. The protein resides in the chloroplast. It catalyses the reaction isopentenyl diphosphate + dimethylallyl diphosphate = (2E)-geranyl diphosphate + diphosphate. The catalysed reaction is isopentenyl diphosphate + (2E)-geranyl diphosphate = (2E,6E)-farnesyl diphosphate + diphosphate. It carries out the reaction isopentenyl diphosphate + (2E,6E)-farnesyl diphosphate = (2E,6E,10E)-geranylgeranyl diphosphate + diphosphate. It functions in the pathway isoprenoid biosynthesis; farnesyl diphosphate biosynthesis; farnesyl diphosphate from geranyl diphosphate and isopentenyl diphosphate: step 1/1. The protein operates within isoprenoid biosynthesis; geranyl diphosphate biosynthesis; geranyl diphosphate from dimethylallyl diphosphate and isopentenyl diphosphate: step 1/1. Its pathway is isoprenoid biosynthesis; geranylgeranyl diphosphate biosynthesis; geranylgeranyl diphosphate from farnesyl diphosphate and isopentenyl diphosphate: step 1/1. Its function is as follows. Catalyzes the trans-addition of the three molecules of IPP onto DMAPP to form geranylgeranyl pyrophosphate. In Arabidopsis thaliana (Mouse-ear cress), this protein is Geranylgeranyl pyrophosphate synthase 9, chloroplastic (GGPPS9).